A 465-amino-acid chain; its full sequence is tRNA modification GTPase MnmE (465 aa).

(6S)-5-formyl-5,6,7,8-tetrahydrofolate-binding residues include R27, E91, and R130. The 160-residue stretch at 227 to 386 folds into the TrmE-type G domain; it reads GLSTAIIGRP…LEAKIADLFF (160 aa). N237 contacts K(+). GTP contacts are provided by residues 237-242, 256-262, and 281-284; these read NVGKSS, TDIAGTT, and DTAG. Residue S241 coordinates Mg(2+). T256, I258, and T261 together coordinate K(+). T262 lines the Mg(2+) pocket. K465 is a binding site for (6S)-5-formyl-5,6,7,8-tetrahydrofolate.

Belongs to the TRAFAC class TrmE-Era-EngA-EngB-Septin-like GTPase superfamily. TrmE GTPase family. In terms of assembly, homodimer. Heterotetramer of two MnmE and two MnmG subunits. It depends on K(+) as a cofactor.

The protein resides in the cytoplasm. In terms of biological role, exhibits a very high intrinsic GTPase hydrolysis rate. Involved in the addition of a carboxymethylaminomethyl (cmnm) group at the wobble position (U34) of certain tRNAs, forming tRNA-cmnm(5)s(2)U34. The protein is tRNA modification GTPase MnmE of Enterococcus faecalis (strain ATCC 700802 / V583).